Reading from the N-terminus, the 880-residue chain is MSSNPQYLSGNEIRNTFLNFFAQRSHQILPSASLVPEDPTVLLTIAGMLPFKPIFLGQRTPEFKRATTSQKCIRTNDIENVGRTKRHHTFFEMLGNFSFGDYFKEQAIAWGWEISTQVFGFSPQNLVVSVFEDDDEAFAIWRDQIGVPVARIKRLGEDDNFWVSGPTGPCGPCSEIYYDFHPERGDENIDLEDDSRFIEFYNLVFMQYNRDVLGNLTPLQNKNIDTGMGLERMAQILQKVPNNYETDLIFPIIQTAAQIAGIDYHSSDEKTKVSLKVIGDHVRSVVHMIADEIRASNVGRGYVLRRLIRRVVRHGRLIGISGEFTTQVAESAIALSESAYPNVRQREAAIKAELQREESNFLRTLDRGEKLLEEIIQEVKQQGSTQISGESAFTLYDTYGFPLELTQEVAEENNLTVDAEGFEAQMEIQKGRGRDAHETIDLTVQGSLDKLAEHIQVTEFLGYTQSAATAIIEAILLEGVSQEEAEAGTQVQIVLDKTPFYAESGGQIGDRGYISGDGIVVRVEDVKKESDFFVHFGRIERGTLRVGDRVTAQIDPACRRRAQANHTATHLLQAALKKIVDDGISQAGSLVSFDRLRFDFNCPRALTAEEVQQVEEQVNSWIAEAHAAKVEVLPLAEAKAKGAVAMFGEKYGDEVRVIDFPNVSMELCGGTHVSNTAEIGVFKIISEAGVASGVRRIEAVSGPAILDYLNLRDKVVKDLSDRFKVKPEELPDRITSLQSELRNSQKELETLKVQLAIAKSDSLLQTAETVGDHKIIVAQLENVDPESLKTAAERLLQKIGNGAVVLGSVPEADKVSIVAAFSPEVNKKGLQAGKFVGAIAKICGGGGGGRPNLAQAGGRDASKLPDALGQAESDLKSALA.

Residues H566, H570, C668, and H672 each contribute to the Zn(2+) site.

Belongs to the class-II aminoacyl-tRNA synthetase family. It depends on Zn(2+) as a cofactor.

The protein resides in the cytoplasm. The enzyme catalyses tRNA(Ala) + L-alanine + ATP = L-alanyl-tRNA(Ala) + AMP + diphosphate. Its function is as follows. Catalyzes the attachment of alanine to tRNA(Ala) in a two-step reaction: alanine is first activated by ATP to form Ala-AMP and then transferred to the acceptor end of tRNA(Ala). Also edits incorrectly charged Ser-tRNA(Ala) and Gly-tRNA(Ala) via its editing domain. The sequence is that of Alanine--tRNA ligase from Nostoc punctiforme (strain ATCC 29133 / PCC 73102).